We begin with the raw amino-acid sequence, 447 residues long: N-succinylarginine dihydrolase (447 aa).

Substrate contacts are provided by residues 19–28 (AGLSFGNEAS), Asn-110, and 137–138 (HR). Glu-174 is an active-site residue. Residue Arg-212 coordinates substrate. His-248 is an active-site residue. Substrate is bound by residues Asp-250 and Asn-359. Residue Cys-365 is the Nucleophile of the active site.

This sequence belongs to the succinylarginine dihydrolase family. As to quaternary structure, homodimer.

The enzyme catalyses N(2)-succinyl-L-arginine + 2 H2O + 2 H(+) = N(2)-succinyl-L-ornithine + 2 NH4(+) + CO2. It functions in the pathway amino-acid degradation; L-arginine degradation via AST pathway; L-glutamate and succinate from L-arginine: step 2/5. Functionally, catalyzes the hydrolysis of N(2)-succinylarginine into N(2)-succinylornithine, ammonia and CO(2). In Escherichia coli O1:K1 / APEC, this protein is N-succinylarginine dihydrolase.